A 130-amino-acid polypeptide reads, in one-letter code: Protein ApaG (130 aa).

One can recognise an ApaG domain in the interval 3-127 (RAVTRRIEVT…FSLDSPEGKR (125 aa)).

This Rhodopseudomonas palustris (strain ATCC BAA-98 / CGA009) protein is Protein ApaG.